A 73-amino-acid chain; its full sequence is Large ribosomal subunit protein bL31 (73 aa).

This sequence belongs to the bacterial ribosomal protein bL31 family. Type A subfamily. In terms of assembly, part of the 50S ribosomal subunit.

Functionally, binds the 23S rRNA. The polypeptide is Large ribosomal subunit protein bL31 (Dinoroseobacter shibae (strain DSM 16493 / NCIMB 14021 / DFL 12)).